We begin with the raw amino-acid sequence, 440 residues long: Chromosome partition protein MukF (440 aa).

Residues 208–236 (LDETSGNLRELQDTLNAAGDKLQSQLLRI) are leucine-zipper.

It belongs to the MukF family. Interacts, and probably forms a ternary complex, with MukE and MukB via its C-terminal region. The complex formation is stimulated by calcium or magnesium. It is required for an interaction between MukE and MukB.

The protein localises to the cytoplasm. The protein resides in the nucleoid. In terms of biological role, involved in chromosome condensation, segregation and cell cycle progression. May participate in facilitating chromosome segregation by condensation DNA from both sides of a centrally located replisome during cell division. Not required for mini-F plasmid partitioning. Probably acts via its interaction with MukB and MukE. Overexpression results in anucleate cells. It has a calcium binding activity. The polypeptide is Chromosome partition protein MukF (Histophilus somni (strain 2336) (Haemophilus somnus)).